A 1785-amino-acid polypeptide reads, in one-letter code: Brefeldin A-inhibited guanine nucleotide-exchange protein 2 (1785 aa).

The residue at position 1 (M1) is an N-acetylmethionine. Residues 2 to 224 form a DCB; DCB:DCB domain and DCB:HUS domain interaction region; the sequence is QESQTKSMFV…KPQSPVIQAA (223 aa). Residues S214, S218, and S227 each carry the phosphoserine modification. Residues 232 to 285 form a disordered region; sequence RLKHSQAQSKPTTPEKTDLTNGEHARSDSGKVSTENGDAPRERGSSLSGTDDGA. Phosphothreonine is present on T244. The span at 244–260 shows a compositional bias: basic and acidic residues; the sequence is TPEKTDLTNGEHARSDS. Phosphoserine is present on residues S277, S348, and S349. An HUS; DCB:HUS domain interaction region spans residues 508–528; that stretch reads ADAQCVVDIYVNYDCDLNAAN. S614 bears the Phosphoserine mark. T616 bears the Phosphothreonine mark. The residue at position 617 (S617) is a Phosphoserine. T626 is subject to Phosphothreonine. The region spanning 654–785 is the SEC7 domain; sequence FNKKPKRGIQ…IIMLTTDLHS (132 aa). S700, S1511, S1513, S1514, S1525, S1528, S1534, and S1782 each carry phosphoserine. Residues 1514–1532 show a composition bias toward polar residues; the sequence is SIDKNPSERGQSQLSNPTD. The segment at 1514-1535 is disordered; sequence SIDKNPSERGQSQLSNPTDDSW.

In terms of assembly, homodimer. Interacts with ARFGEF1/BIG1; both proteins are probably part of the same or very similar macromolecular complexes. Interacts with PRKAR1A, PRKAR2A, PRKAR1B, PRKAR2B, PPP1CC, PDE3A, TNFRSF1A, MYCBP and EXOC7. Interacts with GABRB1, GABRB2 and GABRB3. Post-translationally, in vitro phosphorylated by PKA reducing its GEF activity and dephosphorylated by phosphatase PP1. In terms of tissue distribution, expressed in placenta, lung, heart, brain, kidney and pancreas.

The protein resides in the cytoplasm. It is found in the membrane. The protein localises to the golgi apparatus. It localises to the perinuclear region. Its subcellular location is the trans-Golgi network. The protein resides in the endosome. It is found in the cytoskeleton. The protein localises to the microtubule organizing center. It localises to the centrosome. Its subcellular location is the cell projection. The protein resides in the dendrite. It is found in the cytoplasmic vesicle. The protein localises to the synapse. Its activity is regulated as follows. Inhibited by brefeldin A. Promotes guanine-nucleotide exchange on ARF1 and ARF3 and to a lower extent on ARF5 and ARF6. Promotes the activation of ARF1/ARF5/ARF6 through replacement of GDP with GTP. Involved in the regulation of Golgi vesicular transport. Required for the integrity of the endosomal compartment. Involved in trafficking from the trans-Golgi network (TGN) to endosomes and is required for membrane association of the AP-1 complex and GGA1. Seems to be involved in recycling of the transferrin receptor from recycling endosomes to the plasma membrane. Probably is involved in the exit of GABA(A) receptors from the endoplasmic reticulum. Involved in constitutive release of tumor necrosis factor receptor 1 via exosome-like vesicles; the function seems to involve PKA and specifically PRKAR2B. Proposed to act as A kinase-anchoring protein (AKAP) and may mediate crosstalk between Arf and PKA pathways. The chain is Brefeldin A-inhibited guanine nucleotide-exchange protein 2 (ARFGEF2) from Homo sapiens (Human).